The primary structure comprises 202 residues: Casparian strip membrane protein 1 (202 aa).

Over 1–42 (MEKNKSTAIEIAESSKESKGKAPLLAAAVGHDRAAGYKRGVS) the chain is Cytoplasmic. A helical membrane pass occupies residues 43–63 (IFDLFLRISAATAALAATIVM). Residues 64–90 (GTTEQTLPFFTQFFQFRAQYDDLPTFT) are Extracellular-facing. Residues 91–111 (FFVVGMAIVTGYLILSVPFSI) form a helical membrane-spanning segment. The Cytoplasmic portion of the chain corresponds to 112–130 (VCIARPVAIGPRFLLIVGD). Residues 131–151 (TLKAVLATSAAGSSAAIVYLA) form a helical membrane-spanning segment. Residues 152–173 (HNGNSDANWLDICQQFNDFCQR) lie on the Extracellular side of the membrane. Residues 174–194 (VSGAVVAAFVAVVLLIFLIVL) form a helical membrane-spanning segment. Residues 195–202 (SAMALRKN) are Cytoplasmic-facing.

It belongs to the Casparian strip membrane proteins (CASP) family. Homodimer and heterodimers.

The protein resides in the cell membrane. Its function is as follows. Regulates membrane-cell wall junctions and localized cell wall deposition. Required for establishment of the Casparian strip membrane domain (CSD) and the subsequent formation of Casparian strips, a cell wall modification of the root endodermis that determines an apoplastic barrier between the intraorganismal apoplasm and the extraorganismal apoplasm and prevents lateral diffusion. The sequence is that of Casparian strip membrane protein 1 from Striga hermonthica (Purple witchweed).